Reading from the N-terminus, the 403-residue chain is High affinity transport system protein p37 (403 aa).

An N-terminal signal peptide occupies residues 1–23; it reads MLKKLKNFILFSSIFSPIAFAIS. C24 carries the N-palmitoyl cysteine lipid modification. The S-diacylglycerol cysteine moiety is linked to residue C24.

Its subcellular location is the cell membrane. Its function is as follows. P37 is part of a high-affinity transport system. This is High affinity transport system protein p37 (p37) from Mesomycoplasma hyorhinis (Mycoplasma hyorhinis).